The sequence spans 258 residues: Phosphate import ATP-binding protein PstB (258 aa).

The 241-residue stretch at 13–253 (IEVENLNLWY…PKEQSTEDYI (241 aa)) folds into the ABC transporter domain. 45-52 (GPSGCGKS) is an ATP binding site.

It belongs to the ABC transporter superfamily. Phosphate importer (TC 3.A.1.7) family. In terms of assembly, the complex is composed of two ATP-binding proteins (PstB), two transmembrane proteins (PstC and PstA) and a solute-binding protein (PstS).

The protein resides in the cell membrane. It catalyses the reaction phosphate(out) + ATP + H2O = ADP + 2 phosphate(in) + H(+). Its function is as follows. Part of the ABC transporter complex PstSACB involved in phosphate import. Responsible for energy coupling to the transport system. The polypeptide is Phosphate import ATP-binding protein PstB (Methanosarcina acetivorans (strain ATCC 35395 / DSM 2834 / JCM 12185 / C2A)).